Consider the following 62-residue polypeptide: Large ribosomal subunit protein uL29 (62 aa).

It belongs to the universal ribosomal protein uL29 family.

The polypeptide is Large ribosomal subunit protein uL29 (Oleidesulfovibrio alaskensis (strain ATCC BAA-1058 / DSM 17464 / G20) (Desulfovibrio alaskensis)).